Here is a 1056-residue protein sequence, read N- to C-terminus: PH and SEC7 domain-containing protein 4 (1056 aa).

Positions 25–42 are enriched in basic and acidic residues; it reads LEPHPGECPRETCSHEDP. Disordered stretches follow at residues 25-71, 87-149, 195-239, 340-362, 388-533, and 546-581; these read LEPH…SGVE, CQEQ…QNRS, LPGD…QWGA, GAPA…APSA, VQPW…GDVQ, and LRTP…LANG. 2 stretches are compositionally biased toward polar residues: residues 88 to 99 and 128 to 137; these read QEQTRATDPPES and NTASPGSPVN. Phosphoserine is present on residues serine 131, serine 134, and serine 143. Residues 207 to 220 show a composition bias toward acidic residues; the sequence is ENEDSGEDSSEPEG. At serine 413 the chain carries Phosphoserine. The segment covering 414–423 has biased composition (basic and acidic residues); it reads QDRDEREGGH. The segment covering 438–456 has biased composition (low complexity); sequence RSPASSPEPSSPESESRGP. Serine 448, serine 469, and serine 491 each carry phosphoserine. 2 stretches are compositionally biased toward polar residues: residues 466–476 and 486–502; these read QEGSPQLQHHS and DASQ…QPSS. Residues 504-522 are compositionally biased toward basic and acidic residues; that stretch reads KKKEAGEAPKPGEEVKSEG. The region spanning 544-736 is the SEC7 domain; the sequence is ENLRTPMNSS…KALYWSIRSE (193 aa). The segment covering 548 to 567 has biased composition (polar residues); the sequence is TPMNSSWLPGSPMPQAQSPE. Residues 776–892 form the PH domain; sequence PTYKQGILAR…WIARINLAAA (117 aa). A coiled-coil region spans residues 921–976; the sequence is SSLEEQHRSHENCLDAAADDLLDLQRNLPERRGRGRELEEHRLRKEYLEYEKTRYE. The segment at 1004–1056 is disordered; it reads AGGTREPKLSLKKSHSSPSLHQDEAPTTAKVKRNISERRTYRKIIPKRNRNQL. Serine 1019 and serine 1022 each carry phosphoserine. The span at 1043-1056 shows a compositional bias: basic residues; that stretch reads TYRKIIPKRNRNQL.

Widely expressed. Highest levels of expression are found in placenta, pancreas, spleen, thymus and peripheral blood.

Its subcellular location is the cell membrane. It is found in the cell projection. The protein resides in the ruffle membrane. In terms of biological role, guanine nucleotide exchange factor for ARF6 and ARL14/ARF7. Through ARL14 activation, controls the movement of MHC class II-containing vesicles along the actin cytoskeleton in dendritic cells. Involved in membrane recycling. Interacts with several phosphatidylinositol phosphate species, including phosphatidylinositol 3,4-bisphosphate, phosphatidylinositol 3,5-bisphosphate and phosphatidylinositol 4,5-bisphosphate. The chain is PH and SEC7 domain-containing protein 4 (PSD4) from Homo sapiens (Human).